A 378-amino-acid polypeptide reads, in one-letter code: UPF0754 membrane protein BcerKBAB4_0766 (378 aa).

Helical transmembrane passes span 1 to 21 and 357 to 377; these read MNIWLNMLITTGLGAIIGGYT and YLGALLGGTIGFIQGLLLLFL.

Belongs to the UPF0754 family.

It localises to the cell membrane. The sequence is that of UPF0754 membrane protein BcerKBAB4_0766 from Bacillus mycoides (strain KBAB4) (Bacillus weihenstephanensis).